Here is a 61-residue protein sequence, read N- to C-terminus: MHRRARRMPMRPRRSKRVRNRYTMGTFALHGLTHRLPSASLQTTAARHPDVTQFSMPGHYR.

The first 28 residues, 1–28 (MHRRARRMPMRPRRSKRVRNRYTMGTFA), serve as a signal peptide directing secretion.

This is an uncharacterized protein from Mycobacterium tuberculosis (strain ATCC 25618 / H37Rv).